The primary structure comprises 387 residues: Glutamyl-tRNA reductase 1 (387 aa).

Residues 45 to 48 (TCNR), Ser96, 101 to 103 (ETD), and Gln107 contribute to the substrate site. Cys46 (nucleophile) is an active-site residue. Residue 175 to 180 (GAGSVG) participates in NADP(+) binding.

This sequence belongs to the glutamyl-tRNA reductase family. In terms of assembly, homodimer.

It carries out the reaction (S)-4-amino-5-oxopentanoate + tRNA(Glu) + NADP(+) = L-glutamyl-tRNA(Glu) + NADPH + H(+). It functions in the pathway porphyrin-containing compound metabolism; protoporphyrin-IX biosynthesis; 5-aminolevulinate from L-glutamyl-tRNA(Glu): step 1/2. Its function is as follows. Catalyzes the NADPH-dependent reduction of glutamyl-tRNA(Glu) to glutamate 1-semialdehyde (GSA). This Pyrobaculum arsenaticum (strain DSM 13514 / JCM 11321 / PZ6) protein is Glutamyl-tRNA reductase 1.